We begin with the raw amino-acid sequence, 270 residues long: UPF0246 protein PsycPRwf_0637 (270 aa).

The protein belongs to the UPF0246 family.

The protein is UPF0246 protein PsycPRwf_0637 of Psychrobacter sp. (strain PRwf-1).